The primary structure comprises 355 residues: MKLVDEAEILVTAGNGGNGCVGFRREKFIPLGGPDGGDGGAGGSVWIVADENVNTLVDFRHERTFKAQRGENGMGRQAYGKGGEDRIIVVPVGTVVINVQTDEVIGDLTQHGDRLLVAKGGKGGLGNMHFKSSVNRAPRQATTGEEGEERLLKLELKLLADVGLLGFPNAGKSTLIRAVSAATPKVADYPFTTLYPNLGVVSVEAYRSFVIADVPGLIEGAADGAGLGTQFLRHLQRTRLLLHLVDISPALGVYGEGGVDGVSPADQVRTIERELERHDPELLKKPRWLVLNKADLMFEDEARAAAETIVAELGWTAPWYLVSALGRDGTFPIMKDVMAFFDRQREDELEARNAG.

An Obg domain is found at 1-159; the sequence is MKLVDEAEIL…RLLKLELKLL (159 aa). The OBG-type G domain maps to 160–342; that stretch reads ADVGLLGFPN…IMKDVMAFFD (183 aa). GTP is bound by residues 166 to 173, 191 to 195, 213 to 216, 292 to 295, and 323 to 325; these read GFPNAGKS, FTTLY, DVPG, NKAD, and SAL. Positions 173 and 193 each coordinate Mg(2+).

Belongs to the TRAFAC class OBG-HflX-like GTPase superfamily. OBG GTPase family. As to quaternary structure, monomer. Mg(2+) serves as cofactor.

Its subcellular location is the cytoplasm. An essential GTPase which binds GTP, GDP and possibly (p)ppGpp with moderate affinity, with high nucleotide exchange rates and a fairly low GTP hydrolysis rate. Plays a role in control of the cell cycle, stress response, ribosome biogenesis and in those bacteria that undergo differentiation, in morphogenesis control. In Xanthomonas axonopodis pv. citri (strain 306), this protein is GTPase Obg.